Consider the following 462-residue polypeptide: ATP synthase subunit beta (462 aa).

151-158 (GGAGVGKT) provides a ligand contact to ATP.

Belongs to the ATPase alpha/beta chains family. F-type ATPases have 2 components, CF(1) - the catalytic core - and CF(0) - the membrane proton channel. CF(1) has five subunits: alpha(3), beta(3), gamma(1), delta(1), epsilon(1). CF(0) has three main subunits: a(1), b(2) and c(9-12). The alpha and beta chains form an alternating ring which encloses part of the gamma chain. CF(1) is attached to CF(0) by a central stalk formed by the gamma and epsilon chains, while a peripheral stalk is formed by the delta and b chains.

It localises to the cell inner membrane. The catalysed reaction is ATP + H2O + 4 H(+)(in) = ADP + phosphate + 5 H(+)(out). Its function is as follows. Produces ATP from ADP in the presence of a proton gradient across the membrane. The catalytic sites are hosted primarily by the beta subunits. The chain is ATP synthase subunit beta from Chlorobaculum parvum (strain DSM 263 / NCIMB 8327) (Chlorobium vibrioforme subsp. thiosulfatophilum).